A 419-amino-acid polypeptide reads, in one-letter code: MNIFDELKARGLVFQTTDEAALSKALTEDMVSYYVGYDPTADSLHLGNLVLILTMKRLQMAGHKPYALVGGATGLIGDPSFKDSERSLQTKDTVTKWSGKIRSQLERFLDFENGENKAEMTNNYNWFENLTFIDFLRDVGKHFTVNYMISKDSVKSRMESGISYTEFAYQIMQGYDFYELNQLHNVTLQLGGSDQWGNMTAGTELLRRKANKQGHVITIPLITDSTGKKFGKSEGNAIWLDADKTSPYEMYQFWLNVDDADAVKMLKIFTFLSLEEIAEIEEQFEAARHERLAQKVLAREVVSLVHGKEAYEQAVKTSEILFGGGDLRQLDAKSILTGLKAAPQHQIAPDEDLTLIELLISVGIAPSKRQAREDITNGAIYINGERVQELDYVLTDSDKIENRLTVIRRGKKKNFVLTY.

Residue Tyr34 coordinates L-tyrosine. Positions 39-48 (PTADSLHLGN) match the 'HIGH' region motif. Residues Tyr169 and Gln173 each contribute to the L-tyrosine site. The 'KMSKS' region motif lies at 229–233 (KFGKS). Lys232 provides a ligand contact to ATP. The region spanning 353 to 419 (LTLIELLISV…GKKKNFVLTY (67 aa)) is the S4 RNA-binding domain.

The protein belongs to the class-I aminoacyl-tRNA synthetase family. TyrS type 1 subfamily. As to quaternary structure, homodimer.

It localises to the cytoplasm. The catalysed reaction is tRNA(Tyr) + L-tyrosine + ATP = L-tyrosyl-tRNA(Tyr) + AMP + diphosphate + H(+). Its function is as follows. Catalyzes the attachment of tyrosine to tRNA(Tyr) in a two-step reaction: tyrosine is first activated by ATP to form Tyr-AMP and then transferred to the acceptor end of tRNA(Tyr). This Lactococcus lactis subsp. cremoris (strain MG1363) protein is Tyrosine--tRNA ligase.